A 180-amino-acid polypeptide reads, in one-letter code: Trafficking protein particle complex subunit 3 (180 aa).

Cysteine 68 carries the S-palmitoyl cysteine lipid modification.

This sequence belongs to the TRAPP small subunits family. BET3 subfamily. As to quaternary structure, homodimer. Part of the multisubunit TRAPP (transport protein particle) complex.

The protein resides in the golgi apparatus. The protein localises to the cis-Golgi network. It is found in the endoplasmic reticulum. In terms of biological role, may play a role in vesicular transport from endoplasmic reticulum to Golgi. This Gallus gallus (Chicken) protein is Trafficking protein particle complex subunit 3 (TRAPPC3).